Reading from the N-terminus, the 129-residue chain is Small ribosomal subunit protein uS11 (129 aa).

It belongs to the universal ribosomal protein uS11 family. Part of the 30S ribosomal subunit. Interacts with proteins S7 and S18. Binds to IF-3.

In terms of biological role, located on the platform of the 30S subunit, it bridges several disparate RNA helices of the 16S rRNA. Forms part of the Shine-Dalgarno cleft in the 70S ribosome. This is Small ribosomal subunit protein uS11 from Rhizobium etli (strain CIAT 652).